The chain runs to 104 residues: L-rhamnose mutarotase (104 aa).

Substrate is bound at residue Tyr-18. The active-site Proton donor is the His-22. Substrate is bound by residues Tyr-41 and 76 to 77 (WW).

It belongs to the rhamnose mutarotase family. In terms of assembly, homodimer.

It is found in the cytoplasm. The enzyme catalyses alpha-L-rhamnose = beta-L-rhamnose. The protein operates within carbohydrate metabolism; L-rhamnose metabolism. Functionally, involved in the anomeric conversion of L-rhamnose. In Burkholderia cenocepacia (strain HI2424), this protein is L-rhamnose mutarotase.